The primary structure comprises 67 residues: COP9 signalosome complex subunit 9 homolog (67 aa).

The disordered stretch occupies residues 1-31 (MKPSLAADEMFSEGPGYMEMDESGGATGMMM).

Belongs to the CSN9 family. Probable component of the COP9 signalosome (CSN) complex.

Component of the COP9 signalosome complex (CSN), a complex involved in various cellular and developmental processes. The CSN complex is an essential regulator of the ubiquitin (Ubl) conjugation pathway by mediating the deneddylation of the cullin subunits of SCF-type E3 ligase complexes, leading to decrease the Ubl ligase activity. The chain is COP9 signalosome complex subunit 9 homolog from Drosophila melanogaster (Fruit fly).